The following is a 160-amino-acid chain: Glutathione peroxidase homolog BsaA (160 aa).

The active site involves C35.

The protein belongs to the glutathione peroxidase family.

The chain is Glutathione peroxidase homolog BsaA (bsaA) from Bacillus subtilis (strain 168).